The following is a 236-amino-acid chain: Phosphoribosylaminoimidazole-succinocarboxamide synthase (236 aa).

Belongs to the SAICAR synthetase family.

It carries out the reaction 5-amino-1-(5-phospho-D-ribosyl)imidazole-4-carboxylate + L-aspartate + ATP = (2S)-2-[5-amino-1-(5-phospho-beta-D-ribosyl)imidazole-4-carboxamido]succinate + ADP + phosphate + 2 H(+). It functions in the pathway purine metabolism; IMP biosynthesis via de novo pathway; 5-amino-1-(5-phospho-D-ribosyl)imidazole-4-carboxamide from 5-amino-1-(5-phospho-D-ribosyl)imidazole-4-carboxylate: step 1/2. The chain is Phosphoribosylaminoimidazole-succinocarboxamide synthase from Campylobacter curvus (strain 525.92).